The chain runs to 396 residues: 2-methyl-aconitate isomerase (396 aa).

Residues serine 19 and 66–70 (SSTSK) contribute to the substrate site. The active-site Proton donor/acceptor is cysteine 104. Cysteine 104 bears the Cysteine sulfinic acid (-SO2H) mark. 4 residues coordinate substrate: asparagine 106, lysine 278, serine 309, and histidine 314. Residue methionine 318 is the Proton donor/acceptor of the active site. Glycine 319 contributes to the substrate binding site.

It belongs to the PrpF family. Homodimer.

It carries out the reaction 2-methyl-trans-aconitate = 2-methyl-cis-aconitate. The protein operates within organic acid metabolism; propanoate degradation. Functionally, catalyzes the isomerization of 2-methyl-trans-aconitate to yield 2-methyl-cis-aconitate through a base-catalyzed proton abstraction coupled with a rotation about C2-C3 bond of 2-methyl-aconitate. This Cupriavidus necator (Alcaligenes eutrophus) protein is 2-methyl-aconitate isomerase.